A 471-amino-acid chain; its full sequence is Tumor necrosis factor receptor superfamily member 1A (471 aa).

The signal sequence occupies residues 1 to 29; that stretch reads MGLPTVPGLLLPLVLPALLADVYPAGVQG. The Extracellular portion of the chain corresponds to 30–210; that stretch reads LVPHPGDLEK…GKDSQDPGTT (181 aa). TNFR-Cys repeat units follow at residues 43–82, 83–125, 126–166, and 167–195; these read PCPQ…TDCR, VCAP…DTVC, GCRK…DTIC, and HCHM…KLCP. Disulfide bonds link C44–C58, C59–C72, C62–C81, C84–C99, C102–C117, C105–C125, and C127–C143. Residue N54 is glycosylated (N-linked (GlcNAc...) asparagine). 2 N-linked (GlcNAc...) asparagine glycosylation sites follow: N145 and N151. Cystine bridges form between C146–C158, C149–C166, C168–C179, C182–C194, and C185–C190. A helical transmembrane segment spans residues 211 to 233; sequence VLLPLVIVFGLCLASFASVVLAC. Residues 234–471 are Cytoplasmic-facing; the sequence is RYQRWKPKLY…RLASEPRLLW (238 aa). The segment at 340 to 360 is N-SMase activation domain (NSD); it reads TPGPPASTHLCTPVQKWEASA. The 86-residue stretch at 372–457 folds into the Death domain; sequence PATLYAVVDG…GCLENIEEAL (86 aa).

As to quaternary structure, binding of TNF to the extracellular domain leads to homotrimerization. The aggregated death domains provide a novel molecular interface that interacts specifically with the death domain of TRADD. Various TRADD-interacting proteins such as TRAFS, RIPK1 and possibly FADD, are recruited to the complex by their association with TRADD. This complex activates at least two distinct signaling cascades, apoptosis and NF-kappa-B signaling. Interacts with BAG4, BABAM2, FEM1B, GRB2, SQSTM1 and TRPC4AP. Interacts directly with NOL3 (via CARD domain); inhibits TNF-signaling pathway. Interacts with SH3RF2, TRADD and RIPK1. SH3RF2 facilitates the recruitment of RIPK1 and TRADD to TNFRSF1A in a TNF-alpha-dependent process. Interacts with PGLYRP1; this interaction is important for cell death induction. Interacts (via death domain) with MADD (via death domain).

The protein localises to the cell membrane. Its subcellular location is the golgi apparatus membrane. Receptor for TNFSF2/TNF-alpha and homotrimeric TNFSF1/lymphotoxin-alpha. The adapter molecule FADD recruits caspase-8 to the activated receptor. The resulting death-inducing signaling complex (DISC) performs caspase-8 proteolytic activation which initiates the subsequent cascade of caspases (aspartate-specific cysteine proteases) mediating apoptosis. In Bos taurus (Bovine), this protein is Tumor necrosis factor receptor superfamily member 1A (TNFRSF1A).